The primary structure comprises 639 residues: Chaperone protein HtpG (639 aa).

An a; substrate-binding region spans residues 1–347 (MSHQETHGFQ…SNDLPLNVSR (347 aa)). Residues 348 to 564 (EILQDNKITT…AGEMSSQMIK (217 aa)) are b. The interval 565 to 639 (LMQAAGQAVT…MNKMLLASVK (75 aa)) is c.

It belongs to the heat shock protein 90 family. In terms of assembly, homodimer.

The protein localises to the cytoplasm. Molecular chaperone. Has ATPase activity. The protein is Chaperone protein HtpG of Shewanella loihica (strain ATCC BAA-1088 / PV-4).